The sequence spans 444 residues: Enolase 1 (444 aa).

Positions 165 and 174 each coordinate substrate. Glutamate 217 serves as the catalytic Proton donor. Glutamate 303 and aspartate 330 together coordinate substrate. Residue lysine 355 is the Proton acceptor of the active site. Substrate is bound by residues 382 to 385 (SHRS) and lysine 406.

This sequence belongs to the enolase family. Homodimer. It depends on Mg(2+) as a cofactor.

Its subcellular location is the cytoplasm. It carries out the reaction (2R)-2-phosphoglycerate = phosphoenolpyruvate + H2O. The protein operates within carbohydrate degradation; glycolysis; pyruvate from D-glyceraldehyde 3-phosphate: step 4/5. This Toxoplasma gondii protein is Enolase 1 (ENO1).